We begin with the raw amino-acid sequence, 335 residues long: Nucleoid-associated protein YejK (335 aa).

Belongs to the YejK family.

The protein localises to the cytoplasm. It localises to the nucleoid. In Shigella sonnei (strain Ss046), this protein is Nucleoid-associated protein YejK.